A 1225-amino-acid chain; its full sequence is Chromosome-associated kinesin KIF4 (1225 aa).

The Kinesin motor domain maps to 9 to 338 (IPVRVVRCRP…LRYADRARKI (330 aa)). Position 88–95 (88–95 (GQTGSGKT)) interacts with ATP. A coiled-coil region spans residues 352–1003 (ELNHLKQQVQ…LKQKMLLVQV (652 aa)). 3 disordered regions span residues 498–520 (QDAA…FTTQ), 717–744 (NKRL…GMEG), and 1006–1047 (GQKL…PTPE). The segment covering 507 to 520 (GQVTKRSSDDFTTQ) has biased composition (polar residues). The span at 719–738 (RLKDALQKQREAADKRKESQ) shows a compositional bias: basic and acidic residues. Residues 1004–1225 (ASGQKLRRDQ…GCTPIKEEID (222 aa)) are globular.

The protein belongs to the TRAFAC class myosin-kinesin ATPase superfamily. Kinesin family. Chromokinesin subfamily. It depends on [2Fe-2S] cluster as a cofactor. [4Fe-4S] cluster serves as cofactor. Expressed in proliferating cells; neuroepithelium of embryos.

It is found in the nucleus. The protein resides in the chromosome. It localises to the cytoplasm. The protein localises to the cytoskeleton. Functionally, iron-sulfur (Fe-S) cluster binding motor protein that has a role in chromosome segregation during mitosis. Required for mitotic chromosomal positioning and bipolar spindle stabilization. The protein is Chromosome-associated kinesin KIF4 (KIF4) of Gallus gallus (Chicken).